Consider the following 127-residue polypeptide: Ribonuclease P protein component (127 aa).

It belongs to the RnpA family. In terms of assembly, consists of a catalytic RNA component (M1 or rnpB) and a protein subunit.

It catalyses the reaction Endonucleolytic cleavage of RNA, removing 5'-extranucleotides from tRNA precursor.. RNaseP catalyzes the removal of the 5'-leader sequence from pre-tRNA to produce the mature 5'-terminus. It can also cleave other RNA substrates such as 4.5S RNA. The protein component plays an auxiliary but essential role in vivo by binding to the 5'-leader sequence and broadening the substrate specificity of the ribozyme. This is Ribonuclease P protein component from Rippkaea orientalis (strain PCC 8801 / RF-1) (Cyanothece sp. (strain PCC 8801)).